Here is a 200-residue protein sequence, read N- to C-terminus: MAKVQILNMVVLDNPCPFHNPFQFEITFECIEDLPDDLEWKIIYVGSAESEEYDQTLDSVLVGPVPAGRHMFVFQADAPNCSLIPESDAVGVTVVLITCTYRGQEFIRVGYYVNNEYSDPELRENPPLKAHFGQLQRNILASNPRVTRFHINWECTSEAKMEDIENVDPASNTMLPPNCAPSKGLAAALNTLPENSMDCM.

Belongs to the ASF1 family. Interacts with histone H3 (including both histone H3.1 and H3.3) and histone H4.

The protein resides in the nucleus. Histone chaperone that facilitates histone deposition and histone exchange and removal during nucleosome assembly and disassembly. This is Histone chaperone asf1a-B (asf1ab) from Xenopus laevis (African clawed frog).